The chain runs to 121 residues: Insertion element IS406 uncharacterized 13.3 kDa protein (121 aa).

The polypeptide is Insertion element IS406 uncharacterized 13.3 kDa protein (Burkholderia multivorans (strain ATCC 17616 / 249)).